A 243-amino-acid polypeptide reads, in one-letter code: NAD-dependent protein deacetylase (243 aa).

The Deacetylase sirtuin-type domain maps to 1-243 (MRNDLETLKH…VSVVKSLMTE (243 aa)). The NAD(+) site is built by alanine 24, phenylalanine 35, arginine 36, glutamine 105, isoleucine 107, aspartate 108, and histidine 123. Position 35 (phenylalanine 35) interacts with nicotinamide. Nicotinamide contacts are provided by isoleucine 107 and aspartate 108. Histidine 123 serves as the catalytic Proton acceptor. Zn(2+)-binding residues include cysteine 131, cysteine 134, cysteine 151, and cysteine 154. Residues serine 192, serine 193, asparagine 215, and aspartate 232 each contribute to the NAD(+) site.

Belongs to the sirtuin family. Class U subfamily. The cofactor is Zn(2+).

It localises to the cytoplasm. It catalyses the reaction N(6)-acetyl-L-lysyl-[protein] + NAD(+) + H2O = 2''-O-acetyl-ADP-D-ribose + nicotinamide + L-lysyl-[protein]. NAD-dependent protein deacetylase which modulates the activities of several enzymes which are inactive in their acetylated form. The chain is NAD-dependent protein deacetylase from Staphylococcus aureus (strain MSSA476).